Reading from the N-terminus, the 245-residue chain is Uridylate kinase (245 aa).

14–17 (KLSG) serves as a coordination point for ATP. Residue Gly-56 coordinates UMP. ATP contacts are provided by Gly-57 and Arg-61. Residues Asp-76 and 137–144 (TGLPFFTT) each bind UMP. Residues Thr-164, Tyr-170, and Asp-173 each coordinate ATP.

It belongs to the UMP kinase family. Homohexamer.

Its subcellular location is the cytoplasm. It carries out the reaction UMP + ATP = UDP + ADP. It functions in the pathway pyrimidine metabolism; CTP biosynthesis via de novo pathway; UDP from UMP (UMPK route): step 1/1. Its activity is regulated as follows. Inhibited by UTP. Catalyzes the reversible phosphorylation of UMP to UDP. This chain is Uridylate kinase, found in Syntrophobacter fumaroxidans (strain DSM 10017 / MPOB).